Reading from the N-terminus, the 343-residue chain is 3-dehydroquinate synthase (343 aa).

NAD(+)-binding positions include 61–66 (SGEKYK), 95–99 (GVISD), 119–120 (TT), Lys132, Lys141, and 159–162 (FLKT). Glu174, His231, and His248 together coordinate Zn(2+).

Belongs to the sugar phosphate cyclases superfamily. Dehydroquinate synthase family. The cofactor is Co(2+). It depends on Zn(2+) as a cofactor. NAD(+) is required as a cofactor.

It is found in the cytoplasm. It carries out the reaction 7-phospho-2-dehydro-3-deoxy-D-arabino-heptonate = 3-dehydroquinate + phosphate. It functions in the pathway metabolic intermediate biosynthesis; chorismate biosynthesis; chorismate from D-erythrose 4-phosphate and phosphoenolpyruvate: step 2/7. Catalyzes the conversion of 3-deoxy-D-arabino-heptulosonate 7-phosphate (DAHP) to dehydroquinate (DHQ). The sequence is that of 3-dehydroquinate synthase from Helicobacter pylori (strain HPAG1).